We begin with the raw amino-acid sequence, 249 residues long: Pleckstrin homology domain-containing family F member 2 (249 aa).

Residues 35–131 (VLIGEGVLTK…WMNHINKCVS (97 aa)) enclose the PH domain. An FYVE-type zinc finger spans residues 152–212 (DSEATVCMRC…ICDSCYDLLS (61 aa)). Residues C158, C161, C175, C178, C183, C186, C204, and C207 each coordinate Zn(2+). Positions 219-232 (CQSTRSDSYSQSPK) are enriched in polar residues. The disordered stretch occupies residues 219–249 (CQSTRSDSYSQSPKSSLNDASDDDDDEDSSD). A compositionally biased stretch (acidic residues) spans 238 to 249 (ASDDDDDEDSSD).

It localises to the early endosome membrane. It is found in the endoplasmic reticulum. Its function is as follows. May play a role in early endosome fusion upstream of RAB5, hence regulating receptor trafficking and fluid-phase transport. Enhances cellular sensitivity to TNF-induced apoptosis. This is Pleckstrin homology domain-containing family F member 2 (PLEKHF2) from Gallus gallus (Chicken).